Consider the following 257-residue polypeptide: Zinc transporter ZupT (257 aa).

3 helical membrane passes run 5–25, 32–52, and 61–81; these read LILT…GVLG, VLAF…LMEM, and GMSP…YFGL. Positions 120 and 123 each coordinate Fe(2+). Residues glutamate 123 and histidine 148 each coordinate Zn(2+). Residues asparagine 149, glutamate 152, and glutamate 181 each contribute to the Fe(2+) site. Glutamate 152 contributes to the Zn(2+) binding site. The next 3 membrane-spanning stretches (helical) occupy residues 182–202, 203–223, and 236–256; these read IFGG…IVMA, AIMA…LMPL, and GVLC…TIGI.

This sequence belongs to the ZIP transporter (TC 2.A.5) family. ZupT subfamily.

It localises to the cell inner membrane. It catalyses the reaction Zn(2+)(in) = Zn(2+)(out). Functionally, mediates zinc uptake. May also transport other divalent cations. In Salmonella arizonae (strain ATCC BAA-731 / CDC346-86 / RSK2980), this protein is Zinc transporter ZupT.